The primary structure comprises 273 residues: Homeobox protein ceh-43 (273 aa).

Disordered regions lie at residues 47–79 (NGATGGSMYGTPQQTSAYAMYPPGPGSSPEEAF) and 153–204 (RRSK…LVSS). The segment at residues 102 to 161 (MRKPRTIYNSSQLQMLQKKFQKTQYLALPDRAALAHELGLSQTQVKIWFQNRRSKQKKQK) is a DNA-binding region (homeobox).

It belongs to the distal-less homeobox family. In terms of tissue distribution, predominantly expressed in the head hypdodermis, neuronal support cells and CAN neurons.

It is found in the nucleus. Its function is as follows. Probable transcription factor. Binds to the sequence motif 5'-ATAAT-3' in regulatory elements. Required for development of the anterior hypodermis during embryonic morphogenesis for cell adhesion; also affects embryonic and larval viability. Modulates and maintains dopaminergic neuron differentiation. May activate dopamine pathway genes in concert with ETS domain-containing protein ast-1, and homeobox proteins ceh-40 and ceh-20. This chain is Homeobox protein ceh-43 (ceh-43), found in Caenorhabditis elegans.